Here is a 254-residue protein sequence, read N- to C-terminus: Coenzyme F420:L-glutamate ligase (254 aa).

Residues 11-14, 40-41, and lysine 45 each bind GTP; these read IPLI and ST. An a divalent metal cation-binding site is contributed by aspartate 109. Residue asparagine 112 participates in GTP binding. A divalent metal cation contacts are provided by aspartate 150, threonine 151, and glutamate 208. 206 to 213 contacts GTP; the sequence is MGEGAGGI.

The protein belongs to the CofE family. In terms of assembly, homodimer. It depends on Mg(2+) as a cofactor. The cofactor is Mn(2+). K(+) serves as cofactor.

The catalysed reaction is oxidized coenzyme F420-0 + GTP + L-glutamate = oxidized coenzyme F420-1 + GDP + phosphate + H(+). It carries out the reaction oxidized coenzyme F420-1 + GTP + L-glutamate = oxidized coenzyme F420-2 + GDP + phosphate + H(+). The protein operates within cofactor biosynthesis; coenzyme F420 biosynthesis. Functionally, catalyzes the GTP-dependent successive addition of two or more gamma-linked L-glutamates to the L-lactyl phosphodiester of 7,8-didemethyl-8-hydroxy-5-deazariboflavin (F420-0) to form coenzyme F420-0-glutamyl-glutamate (F420-2) or polyglutamated F420 derivatives. The sequence is that of Coenzyme F420:L-glutamate ligase from Methanosarcina mazei (strain ATCC BAA-159 / DSM 3647 / Goe1 / Go1 / JCM 11833 / OCM 88) (Methanosarcina frisia).